The following is a 2156-amino-acid chain: MAM and LDL-receptor class A domain-containing protein 1 (2156 aa).

An N-terminal signal peptide occupies residues 1 to 31 (MLFFLDRMLAFPMNETFCCLWIACVFNSTLA). Topologically, residues 32–2076 (QQGTESFQCD…FTYAQNNTWT (2045 aa)) are vesicular. Positions 33–68 (QGTESFQCDNGVSLPPDSICDFTDQCGDSSDERHCL) constitute an LDL-receptor class A 1 domain. Disulfide bonds link Cys-40–Cys-58 and Cys-52–Cys-67. 2 consecutive MAM domains span residues 71–229 (ERCD…GCLP) and 268–427 (QACG…ACGQ). The LDL-receptor class A 2 domain occupies 433–471 (LCSADEFPCTSGQCIAKESVCDSRQDCSDESDEDPATCS). Cystine bridges form between Cys-434–Cys-446, Cys-441–Cys-459, and Cys-453–Cys-470. MAM domains are found at residues 474-637 (LTCD…ECEI) and 652-816 (SKCD…NCTL). Asn-813 is a glycosylation site (N-linked (GlcNAc...) asparagine). An LDL-receptor class A 3 domain is found at 822 to 860 (SCEGLDHFWCRHTRACIEKLRLCDLVDDCGDRTDEVNCA). Cystine bridges form between Cys-823-Cys-837, Cys-831-Cys-850, and Cys-844-Cys-859. The 162-residue stretch at 863–1024 (LQCNFETGIC…DDLSFMDCTL (162 aa)) folds into the MAM 5 domain. Asn-1049 carries an N-linked (GlcNAc...) asparagine glycan. The 38-residue stretch at 1049–1086 (NCTDNEFICRSDGHCIEKMQKCDFKYDCPDKSDEASCV) folds into the LDL-receptor class A 4 domain. 3 disulfides stabilise this stretch: Cys-1050/Cys-1063, Cys-1057/Cys-1076, and Cys-1070/Cys-1085. In terms of domain architecture, MAM 6 spans 1088–1256 (EVCSFEKRSL…DDISFQDCSP (169 aa)). Asn-1199 carries an N-linked (GlcNAc...) asparagine glycan. In terms of domain architecture, LDL-receptor class A 5 spans 1263-1301 (KCTDHEFMCANKHCIAKDKLCDFVNDCADNSDETTFICR). Disulfide bonds link Cys-1264–Cys-1276, Cys-1271–Cys-1289, and Cys-1283–Cys-1300. In terms of domain architecture, MAM 7 spans 1305 to 1465 (GRCDFEFDLC…DIVLTENCLS (161 aa)). Asn-1414 carries N-linked (GlcNAc...) asparagine glycosylation. The LDL-receptor class A 6 domain occupies 1482-1518 (FCPLGYRECHNGKCYRLEQSCNFVDNCGDNTDENECG). Intrachain disulfides connect Cys-1483-Cys-1495, Cys-1490-Cys-1508, and Cys-1502-Cys-1517. The region spanning 1519-1676 (SSCTFEKGWC…DDIEFKNCTT (158 aa)) is the MAM 8 domain. The 38-residue stretch at 1683-1720 (LCPEITDFLCRDKKCIASHLLCDYKPDCSDRSDEAHCA) folds into the LDL-receptor class A 7 domain. Disulfide bonds link Cys-1684-Cys-1697, Cys-1692-Cys-1710, and Cys-1704-Cys-1719. The region spanning 1727–1892 (GSCNFETSSG…DISFTPECVT (166 aa)) is the MAM 9 domain. LDL-receptor class A domains are found at residues 1902–1939 (PCEA…MDCP), 1946–1982 (LCSN…LICS), and 1985–2023 (SCSN…SSCS). Cystine bridges form between Cys-1903-Cys-1916, Cys-1910-Cys-1929, Cys-1923-Cys-1938, Cys-1947-Cys-1959, Cys-1954-Cys-1972, Cys-1966-Cys-1981, Cys-1986-Cys-1999, Cys-1993-Cys-2012, Cys-2006-Cys-2022, Cys-2025-Cys-2036, Cys-2030-Cys-2045, and Cys-2047-Cys-2056. Residues 2024-2057 (ECPLNYCRNGGTCVVEKNGPMCRCRQGWKGNRCH) form the EGF-like domain. A helical membrane pass occupies residues 2077–2097 (LLGIGLAFLMTHITVAVLCFL). The Cytoplasmic portion of the chain corresponds to 2098 to 2156 (ANRKVPIRKTEGSGNCAFVNPVYGNWSNPEKTESSVYSFSNPLYGTTSGSLETLSHHLK).

As to quaternary structure, interacts with FGF19. As to expression, strongly expressed in the small intestine.

It is found in the cytoplasmic vesicle membrane. Functionally, enhances production and/or transport of FGF19 and thus has a role in regulation of bile acid synthesis. The sequence is that of MAM and LDL-receptor class A domain-containing protein 1 from Homo sapiens (Human).